The primary structure comprises 383 residues: Cathepsin D (383 aa).

Positions 1 to 18 (MKLLILTLFLATIVLAQA) are cleaved as a signal peptide. Positions 19-48 (LTVPLNFHQASRESRRRVPQKWSNRLSALN) are excised as a propeptide. Residues 63–378 (YYGAITIGTP…DFGNKQVGFA (316 aa)) form the Peptidase A1 domain. Aspartate 81 is a catalytic residue. A disulfide bridge connects residues cysteine 94 and cysteine 101. Asparagine 118 and asparagine 238 each carry an N-linked (GlcNAc...) asparagine glycan. Cysteines 259 and 263 form a disulfide. Aspartate 268 is a catalytic residue. The cysteines at positions 302 and 339 are disulfide-linked. Residue asparagine 310 is glycosylated (N-linked (GlcNAc...) asparagine).

This sequence belongs to the peptidase A1 family. In terms of assembly, monomer. In terms of processing, N-glycosylated on 2 out of the 3 potential sites. Glycans contain sulfated Mannose.

The protein localises to the lysosome. Its subcellular location is the secreted. The enzyme catalyses Specificity similar to, but narrower than, that of pepsin A. Does not cleave the 4-Gln-|-His-5 bond in B chain of insulin.. Its function is as follows. Protease that may act during cell growth and/or development. The polypeptide is Cathepsin D (ctsD) (Dictyostelium discoideum (Social amoeba)).